The sequence spans 729 residues: MGDYGFGVLVQSNTGNKSAFPVRFHPHLQPPHHHQNATPSPAAFINNNTAANGSSAGSAWLFPAPATHNIQDEILGSEKAKSQQQEQQDPLEKQQLSPSPGQEAGILPETEKAKSEENQGDNSSENGNGKEKIRIESPVLTGFDYQEATGLGTSTQPLTSSASSLTGFSNWSAAIAPSSSTIINEDASFFHQGGVPAASANNGALLFQNFPHHVSPGFGGSFSPQIGPLSQHHPHHPHFQHHHSQHQQQRRSPASPHPPPFTHRNAAFNQLPHLANNLNKPPSPWSSYQSPSPTPSSSWSPGGGGYGGWGGSQGRDHRRGLNGGITPLNSISPLKKNFASNHIQLQKYARPSSAFAPKSWMEDSLNRADNIFPFPDRPRTFDMHSLESSLIDIMRAENDTIKGRLNYSYPGSDSSLLINARTYGRRRGQSSLFPMEDGFLDDGRGDQPLHSGLGSPHCFSHQNGERVERYSRKVFVGGLPPDIDEDEITASFRRFGPLIVDWPHKAESKSYFPPKGYAFLLFQDESSVQALIDACIEEDGKLYLCVSSPTIKDKPVQIRPWNLSDSDFVMDGSQPLDPRKTIFVGGVPRPLRAVELAMIMDRLYGGVCYAGIDTDPELKYPKGAGRVAFSNQQSYIAAISARFVQLQHGEIDKRVEVKPYVLDDQLCDECQGARCGGKFAPFFCANVTCLQYYCEYCWAAIHSRAGREFHKPLVKEGGDRPRHISFRWN.

Disordered stretches follow at residues 20-49 and 78-133; these read FPVR…NNNT and EKAK…KEKI. Positions 24–35 are enriched in basic residues; sequence FHPHLQPPHHHQ. Over residues 83–96 the composition is skewed to low complexity; that stretch reads QQQEQQDPLEKQQL. Serine 97, serine 99, and serine 137 each carry phosphoserine. Residues 218–328 are disordered; it reads FGGSFSPQIG…RGLNGGITPL (111 aa). Over residues 232-249 the composition is skewed to basic residues; sequence HHPHHPHFQHHHSQHQQQ. 2 positions are modified to phosphoserine: serine 252 and serine 255. The span at 285-300 shows a compositional bias: low complexity; the sequence is WSSYQSPSPTPSSSWS. The span at 301-313 shows a compositional bias: gly residues; the sequence is PGGGGYGGWGGSQ. Phosphothreonine is present on threonine 326. A phosphoserine mark is found at serine 330 and serine 332. RRM domains follow at residues 472-563 and 580-662; these read RKVF…PWNL and KTIF…PYVL. An RNA-binding region spans residues 541-543; that stretch reads KLY. Residues cysteine 667, cysteine 675, cysteine 684, cysteine 689, cysteine 694, cysteine 697, histidine 702, and histidine 710 each contribute to the Zn(2+) site.

This sequence belongs to the RRM CPEB family. Interacts with TOB1. Expressed in pancreas in islets and ductal cells (at protein level). Expressed in melanocytes.

Its subcellular location is the cytoplasm. It localises to the cell projection. It is found in the dendrite. The protein localises to the dendritic spine. The protein resides in the postsynaptic density. Its subcellular location is the axon. It localises to the growth cone. It is found in the endoplasmic reticulum. The protein localises to the perinuclear region. In terms of biological role, sequence-specific RNA-binding protein that binds to the cytoplasmic polyadenylation element (CPE), an uridine-rich sequence element (consensus sequence 5'-UUUUUAU-3') within the mRNA 3'-UTR. RNA binding results in a clear conformational change analogous to the Venus fly trap mechanism. Regulates activation of unfolded protein response (UPR) in the process of adaptation to ER stress in liver, by maintaining translation of CPE-regulated mRNAs in conditions in which global protein synthesis is inhibited. Required for cell cycle progression, specifically for cytokinesis and chromosomal segregation. Plays a role as an oncogene promoting tumor growth and progression by positively regulating translation of t-plasminogen activator/PLAT. Stimulates proliferation of melanocytes. In contrast to CPEB1 and CPEB3, does not play role in synaptic plasticity, learning and memory. In Homo sapiens (Human), this protein is Cytoplasmic polyadenylation element-binding protein 4 (CPEB4).